The sequence spans 897 residues: Patched domain-containing protein 1 (897 aa).

Residues 25-45 (PVFFLTVPAVLTIIFGSTVLS) form a helical membrane-spanning segment. Residues N132, N167, and N179 are each glycosylated (N-linked (GlcNAc...) asparagine). 2 helical membrane-spanning segments follow: residues 271-291 (GVLA…AATI) and 306-326 (GLLG…IFFI). An SSD domain is found at 273-433 (LAKSEVLVSL…FSFYGSCLVF (161 aa)). A glycan (N-linked (GlcNAc...) asparagine) is linked at N332. A run of 4 helical transmembrane segments spans residues 335-355 (LLGI…ELLA), 377-397 (VMVC…MGAS), 414-434 (VAVL…LVFA), and 506-526 (PFVV…CLQI). N-linked (GlcNAc...) asparagine glycosylation is found at N572 and N603. Transmembrane regions (helical) follow at residues 701–721 (PILT…FLVI), 727–747 (FWLI…MTLW), and 754–774 (ISIL…APHL). N-linked (GlcNAc...) asparagine glycosylation is present at N803. The next 2 helical transmembrane spans lie at 806–826 (CFVI…YTLF) and 831–851 (LTAG…LTFF). Positions 856 to 866 (KRHKKKKRAKR) are enriched in basic residues. Residues 856 to 881 (KRHKKKKRAKRKEREREREREREREE) form a disordered region. Residues 867-881 (KEREREREREREREE) show a composition bias toward basic and acidic residues.

The protein belongs to the patched family.

The protein resides in the cell membrane. Its subcellular location is the cell projection. The protein localises to the dendritic spine. Can bind cholesterol in vitro. The protein is Patched domain-containing protein 1 (ptchd1) of Danio rerio (Zebrafish).